A 1196-amino-acid chain; its full sequence is Truncated transposon Ty1-A Gag-Pol polyprotein (1196 aa).

Residues 101-276 (NSYEPFQYLH…AGLDISTLLP (176 aa)) form the Integrase catalytic domain. Mg(2+) is bound by residues aspartate 112 and aspartate 177. Disordered regions lie at residues 397 to 528 (SKAV…ETEK), 533 to 552 (RSPSIDASPPENNSSHNIVP), and 571 to 628 (DLPL…DNET). Low complexity predominate over residues 401–410 (SPTDSTPPST). Residues 446-456 (STPQISNIEST) are compositionally biased toward polar residues. Basic and acidic residues predominate over residues 479 to 494 (ESSHASKSKDFRHSDS). 2 stretches are compositionally biased toward polar residues: residues 495 to 523 (YSENETNHTNVPISSTGGTNNKTVPQISD) and 542 to 552 (PENNSSHNIVP). Positions 619–653 (KKRSLEDNETEIKVSRDTWNTKNMRSLEPPRSKKR) match the Bipartite nuclear localization signal motif. Residues 779–917 (NNYYITQLDI…DILGLEIKYQ (139 aa)) enclose the Reverse transcriptase Ty1/copia-type domain. Residues aspartate 787, aspartate 868, aspartate 869, aspartate 1051, glutamate 1093, and aspartate 1126 each coordinate Mg(2+). One can recognise an RNase H Ty1/copia-type domain in the interval 1051 to 1193 (DASYGNQPYY…IKTFKLLTNK (143 aa)).

Post-translationally, initially, virus-like particles (VLPs) are composed of the structural unprocessed proteins Gag and Gag-Pol, and also contain the host initiator methionine tRNA (tRNA(i)-Met) which serves as a primer for minus-strand DNA synthesis, and a dimer of genomic Ty RNA. Processing of the polyproteins occurs within the particle and proceeds by an ordered pathway, called maturation. First, the protease (PR) is released by autocatalytic cleavage of the Gag-Pol polyprotein yielding capsid protein p45 and a Pol-p154 precursor protein. This cleavage is a prerequisite for subsequent processing of Pol-p154 at the remaining sites to release the mature structural and catalytic proteins. Maturation takes place prior to the RT reaction and is required to produce transposition-competent VLPs.

The protein localises to the cytoplasm. Its subcellular location is the nucleus. The enzyme catalyses DNA(n) + a 2'-deoxyribonucleoside 5'-triphosphate = DNA(n+1) + diphosphate. It catalyses the reaction Endonucleolytic cleavage to 5'-phosphomonoester.. Reverse transcriptase/ribonuclease H (RT) is a multifunctional enzyme that catalyzes the conversion of the retro-elements RNA genome into dsDNA within the VLP. The enzyme displays a DNA polymerase activity that can copy either DNA or RNA templates, and a ribonuclease H (RNase H) activity that cleaves the RNA strand of RNA-DNA heteroduplexes during plus-strand synthesis and hydrolyzes RNA primers. The conversion leads to a linear dsDNA copy of the retrotransposon that includes long terminal repeats (LTRs) at both ends. Functionally, integrase (IN) targets the VLP to the nucleus, where a subparticle preintegration complex (PIC) containing at least integrase and the newly synthesized dsDNA copy of the retrotransposon must transit the nuclear membrane. Once in the nucleus, integrase performs the integration of the dsDNA into the host genome. The protein is Truncated transposon Ty1-A Gag-Pol polyprotein (TY1B-A) of Saccharomyces cerevisiae (strain ATCC 204508 / S288c) (Baker's yeast).